The primary structure comprises 308 residues: Ribosomal RNA large subunit methyltransferase F (308 aa).

It belongs to the methyltransferase superfamily. METTL16/RlmF family.

Its subcellular location is the cytoplasm. The enzyme catalyses adenosine(1618) in 23S rRNA + S-adenosyl-L-methionine = N(6)-methyladenosine(1618) in 23S rRNA + S-adenosyl-L-homocysteine + H(+). Functionally, specifically methylates the adenine in position 1618 of 23S rRNA. The chain is Ribosomal RNA large subunit methyltransferase F from Salmonella agona (strain SL483).